The sequence spans 190 residues: Xanthine phosphoribosyltransferase (190 aa).

Positions 20 and 27 each coordinate xanthine. A 5-phospho-alpha-D-ribose 1-diphosphate-binding site is contributed by 127-131; that stretch reads AYGNA. A xanthine-binding site is contributed by K155.

This sequence belongs to the purine/pyrimidine phosphoribosyltransferase family. Xpt subfamily. Homodimer.

It localises to the cytoplasm. The enzyme catalyses XMP + diphosphate = xanthine + 5-phospho-alpha-D-ribose 1-diphosphate. It participates in purine metabolism; XMP biosynthesis via salvage pathway; XMP from xanthine: step 1/1. Its function is as follows. Converts the preformed base xanthine, a product of nucleic acid breakdown, to xanthosine 5'-monophosphate (XMP), so it can be reused for RNA or DNA synthesis. The protein is Xanthine phosphoribosyltransferase of Bacteroides thetaiotaomicron (strain ATCC 29148 / DSM 2079 / JCM 5827 / CCUG 10774 / NCTC 10582 / VPI-5482 / E50).